The following is a 567-amino-acid chain: Diacylglycerol kinase epsilon (567 aa).

Residues 22-42 form a helical membrane-spanning segment; it reads LILWTLCSVLLPVFITFWCSL. Phorbol-ester/DAG-type zinc fingers lie at residues 59–108 and 124–177; these read KHGW…RFQC and PHHW…NEKC. In terms of domain architecture, DAGKc spans 215-356; it reads KQWTPLIILA…LDRWKVQVTN (142 aa).

Belongs to the eukaryotic diacylglycerol kinase family. Expressed predominantly in testis. Expressed in endothelium, platelets and podocytes (at protein level).

The protein localises to the membrane. The protein resides in the cytoplasm. The catalysed reaction is a 1,2-diacyl-sn-glycerol + ATP = a 1,2-diacyl-sn-glycero-3-phosphate + ADP + H(+). It catalyses the reaction 1-hexadecanoyl-2-(5Z,8Z,11Z,14Z-eicosatetraenoyl)-sn-glycerol + ATP = 1-hexadecanoyl-2-(5Z,8Z,11Z,14Z-eicosatetraenoyl)-sn-glycero-3-phosphate + ADP + H(+). It carries out the reaction 1-octadecanoyl-2-(5Z,8Z,11Z,14Z-eicosatetraenoyl)-sn-glycerol + ATP = 1-octadecanoyl-2-(5Z,8Z,11Z,14Z-eicosatetraenoyl)-sn-glycero-3-phosphate + ADP + H(+). The enzyme catalyses 1-eicosanoyl-2-(5Z,8Z,11Z,14Z)-eicosatetraenoyl-sn-glycerol + ATP = 1-eicosanoyl-2-(5Z,8Z,11Z,14Z)-eicosatetraenoyl-sn-glycero-3-phosphate + ADP + H(+). The catalysed reaction is 1,2-di-(5Z,8Z,11Z,14Z)-eicosatetraenoyl-sn-glycerol + ATP = 1,2-di-(5Z,8Z,11Z,14Z)-eicosatetraenoyl-sn-glycero-3-phosphate + ADP + H(+). It catalyses the reaction 1-octadecanoyl-2-(9Z,12Z)-octadecadienoyl-sn-glycerol + ATP = 1-octadecanoyl-2-(9Z,12Z-octadecadienoyl)-sn-glycero-3-phosphate + ADP + H(+). It carries out the reaction 1,2-di-(9Z,12Z-octadecadienoyl)-sn-glycerol + ATP = 1,2-di-(9Z,12Z-octadecadienoyl)-sn-glycero-3-phosphate + ADP + H(+). The enzyme catalyses 1,2-di-(9Z-octadecenoyl)-sn-glycerol + ATP = 1,2-di-(9Z-octadecenoyl)-sn-glycero-3-phosphate + ADP + H(+). Its pathway is lipid metabolism; glycerolipid metabolism. With respect to regulation, undergoes competitive inhibition by its own product 1,2-diacyl-sn-glycero-3-phosphate/phosphatidic acid. The strongest inhibition being observed in vitro with 1-octadecanoyl-2-(5Z,8Z,11Z,14Z-eicosatetraenoyl)-sn-glycero-3-phosphate, a major intermediate in the phosphatidylinositol turnover cycle and more generally by diacylglycerols with an arachidonoyl acyl chain at the sn-2 position. Functionally, membrane-bound diacylglycerol kinase that converts diacylglycerol/DAG into phosphatidic acid/phosphatidate/PA and regulates the respective levels of these two bioactive lipids. Thereby, acts as a central switch between the signaling pathways activated by these second messengers with different cellular targets and opposite effects in numerous biological processes. Also plays an important role in the biosynthesis of complex lipids. Displays specificity for diacylglycerol substrates with an arachidonoyl acyl chain at the sn-2 position, with the highest activity toward 1-octadecanoyl-2-(5Z,8Z,11Z,14Z-eicosatetraenoyl)-sn-glycerol the main diacylglycerol intermediate within the phosphatidylinositol turnover cycle. Can also phosphorylate diacylglycerol substrates with a linoleoyl acyl chain at the sn-2 position but much less efficiently. This Homo sapiens (Human) protein is Diacylglycerol kinase epsilon (DGKE).